Consider the following 366-residue polypeptide: S-adenosylmethionine:tRNA ribosyltransferase-isomerase (366 aa).

This sequence belongs to the QueA family. As to quaternary structure, monomer.

It localises to the cytoplasm. The enzyme catalyses 7-aminomethyl-7-carbaguanosine(34) in tRNA + S-adenosyl-L-methionine = epoxyqueuosine(34) in tRNA + adenine + L-methionine + 2 H(+). It participates in tRNA modification; tRNA-queuosine biosynthesis. Functionally, transfers and isomerizes the ribose moiety from AdoMet to the 7-aminomethyl group of 7-deazaguanine (preQ1-tRNA) to give epoxyqueuosine (oQ-tRNA). The sequence is that of S-adenosylmethionine:tRNA ribosyltransferase-isomerase from Bradyrhizobium diazoefficiens (strain JCM 10833 / BCRC 13528 / IAM 13628 / NBRC 14792 / USDA 110).